Reading from the N-terminus, the 194-residue chain is Holliday junction branch migration complex subunit RuvA (194 aa).

The domain I stretch occupies residues 1–64 (MIGRITGLLL…EDVHLLFGFM (64 aa)). Positions 65 to 140 (TEQERALFRQ…KIDPVAILSE (76 aa)) are domain II. Residues 140–143 (EAGA) are flexible linker. A domain III region spans residues 144–194 (AASNVDKDILSALLALGYNGREVNRALEQLSEGVTVSDGIMQSLKFLSKVK).

It belongs to the RuvA family. In terms of assembly, homotetramer. Forms an RuvA(8)-RuvB(12)-Holliday junction (HJ) complex. HJ DNA is sandwiched between 2 RuvA tetramers; dsDNA enters through RuvA and exits via RuvB. An RuvB hexamer assembles on each DNA strand where it exits the tetramer. Each RuvB hexamer is contacted by two RuvA subunits (via domain III) on 2 adjacent RuvB subunits; this complex drives branch migration. In the full resolvosome a probable DNA-RuvA(4)-RuvB(12)-RuvC(2) complex forms which resolves the HJ.

Its subcellular location is the cytoplasm. Functionally, the RuvA-RuvB-RuvC complex processes Holliday junction (HJ) DNA during genetic recombination and DNA repair, while the RuvA-RuvB complex plays an important role in the rescue of blocked DNA replication forks via replication fork reversal (RFR). RuvA specifically binds to HJ cruciform DNA, conferring on it an open structure. The RuvB hexamer acts as an ATP-dependent pump, pulling dsDNA into and through the RuvAB complex. HJ branch migration allows RuvC to scan DNA until it finds its consensus sequence, where it cleaves and resolves the cruciform DNA. The polypeptide is Holliday junction branch migration complex subunit RuvA (Nitrosomonas eutropha (strain DSM 101675 / C91 / Nm57)).